The following is a 326-amino-acid chain: RNA-binding motif protein, X-linked 2 (326 aa).

Residue Lys-8 forms a Glycyl lysine isopeptide (Lys-Gly) (interchain with G-Cter in SUMO2) linkage. In terms of domain architecture, RRM spans 36-114 (AWIFVGGLPY…RTIRVDHVSN (79 aa)). Residues 117-326 (APQESEDVDD…SYHGSDRRHH (210 aa)) form a disordered region. Thr-140 is modified (phosphothreonine). Ser-149 carries the post-translational modification Phosphoserine. Basic residues predominate over residues 157 to 172 (TKKHKKDKKEKKKRKK). A compositionally biased stretch (polar residues) spans 177–190 (GQAQAEQPSCSRSA). Composition is skewed to basic and acidic residues over residues 191-200 (TVKEKKDERA), 207-219 (KTSE…EHRE), 236-245 (ARAEDPECKA), and 255-273 (KSAS…ERGR). Ser-274 is modified (phosphoserine). Basic residues predominate over residues 291 to 312 (HRSRSRSRSPDKSHRHKKYRHS). A compositionally biased stretch (basic and acidic residues) spans 313-326 (RERDSYHGSDRRHH).

The protein belongs to the IST3 family. Part of the activated spliceosome B/catalytic step 1 spliceosome, one of the forms of the spliceosome which has a well-formed active site but still cannot catalyze the branching reaction and is composed of at least 52 proteins, the U2, U5 and U6 snRNAs and the pre-mRNA. Component of the minor spliceosome, which splices U12-type introns.

It localises to the nucleus. Its function is as follows. Involved in pre-mRNA splicing as component of the activated spliceosome. As a component of the minor spliceosome, involved in the splicing of U12-type introns in pre-mRNAs. This is RNA-binding motif protein, X-linked 2 (Rbmx2) from Mus musculus (Mouse).